A 492-amino-acid chain; its full sequence is N-succinylglutamate 5-semialdehyde dehydrogenase (492 aa).

220-225 (GSANTG) contributes to the NAD(+) binding site. Active-site residues include E243 and C277.

Belongs to the aldehyde dehydrogenase family. AstD subfamily.

The enzyme catalyses N-succinyl-L-glutamate 5-semialdehyde + NAD(+) + H2O = N-succinyl-L-glutamate + NADH + 2 H(+). It functions in the pathway amino-acid degradation; L-arginine degradation via AST pathway; L-glutamate and succinate from L-arginine: step 4/5. Its function is as follows. Catalyzes the NAD-dependent reduction of succinylglutamate semialdehyde into succinylglutamate. This Escherichia coli (strain UTI89 / UPEC) protein is N-succinylglutamate 5-semialdehyde dehydrogenase.